The following is a 392-amino-acid chain: Adenosine 3'-phospho 5'-phosphosulfate transporter 2 (392 aa).

A disordered region spans residues Asn11–Ser35. A run of 10 helical transmembrane segments spans residues Cys62–Val82, Pro87–Glu107, Leu136–Leu156, Pro159–Ile179, Gly185–Ala205, Asn212–Gly232, Val249–Gly269, Phe286–Leu306, Ile314–Phe334, and Phe338–Tyr358.

Belongs to the nucleotide-sugar transporter family. SLC35B subfamily.

Its subcellular location is the golgi apparatus membrane. In terms of biological role, mediates the transport of adenosine 3'-phospho 5'-phosphosulfate (PAPS), from cytosol into Golgi. PAPS is a universal sulfuryl donor for sulfation events that take place in the Golgi. Essential for viability. Involved in glycosaminoglycan synthesis and the subsequent signaling. May be involved in hh and dpp signaling by controlling the sulfation of heparan sulfate (HS). In Drosophila pseudoobscura pseudoobscura (Fruit fly), this protein is Adenosine 3'-phospho 5'-phosphosulfate transporter 2.